The primary structure comprises 967 residues: Protein moonraker (967 aa).

Positions 178–201 are disordered; the sequence is SHPGQSDLTVPNSPPTHDPGLQPH. Residues 179–188 show a composition bias toward polar residues; the sequence is HPGQSDLTVP. 2 positions are modified to phosphoserine: S287 and S409. 2 disordered regions span residues 401–431 and 490–601; these read ALERWPSTSPKGERRPLTAKDTFPQETSRPS and KAGK…SHLT. Residues 525–543 are compositionally biased toward polar residues; the sequence is QSQPHSKSRVQQTTVSSRL. Over residues 557–568 the composition is skewed to pro residues; sequence WIPPNPTSPPAS. A coiled-coil region spans residues 616–642; it reads AETSKRLKELEELKAKEIDSMQKQRLD. Residues S700 and S826 each carry the phosphoserine modification. Positions 849–872 are disordered; sequence RPCNGNSLDESVGTEEGSEKREAP. Residues 885–967 form a necessary and sufficient for CEP20-binding region; sequence GRAPLFVPPG…FTSEFLEAAT (83 aa).

Interacts with CEP63. Interacts with WDR62. Forms a complex with OFD1 and CEP20/FOR20. Interacts with PCM1.

The protein localises to the cytoplasm. Its subcellular location is the cytoskeleton. It is found in the microtubule organizing center. It localises to the centrosome. The protein resides in the centriole. The protein localises to the centriolar satellite. In terms of biological role, involved in centriole duplication. Positively regulates CEP63 centrosomal localization. Required for WDR62 centrosomal localization and promotes the centrosomal localization of CDK2. May play a role in cilium assembly. In Homo sapiens (Human), this protein is Protein moonraker (KIAA0753).